The primary structure comprises 346 residues: tRNA N6-adenosine threonylcarbamoyltransferase (346 aa).

The Fe cation site is built by histidine 111 and histidine 115. Residues 134-138 (LVSGG), aspartate 167, glycine 180, aspartate 184, and asparagine 279 each bind substrate. Aspartate 307 serves as a coordination point for Fe cation.

Belongs to the KAE1 / TsaD family. Requires Fe(2+) as cofactor.

The protein localises to the cytoplasm. It catalyses the reaction L-threonylcarbamoyladenylate + adenosine(37) in tRNA = N(6)-L-threonylcarbamoyladenosine(37) in tRNA + AMP + H(+). In terms of biological role, required for the formation of a threonylcarbamoyl group on adenosine at position 37 (t(6)A37) in tRNAs that read codons beginning with adenine. Is involved in the transfer of the threonylcarbamoyl moiety of threonylcarbamoyl-AMP (TC-AMP) to the N6 group of A37, together with TsaE and TsaB. TsaD likely plays a direct catalytic role in this reaction. The polypeptide is tRNA N6-adenosine threonylcarbamoyltransferase (Nostoc sp. (strain PCC 7120 / SAG 25.82 / UTEX 2576)).